Here is a 31-residue protein sequence, read N- to C-terminus: Cyclotide vico-A (31 aa).

Positions 1-31 form a cross-link, cyclopeptide (Gly-Asn); sequence GSIPCAESCVYIPCFTGIAGCSCKNKVCYYN. 3 disulfides stabilise this stretch: C5-C21, C9-C23, and C14-C28.

It belongs to the cyclotide family. Bracelet subfamily. In terms of processing, this is a cyclic peptide.

Its function is as follows. Probably participates in a plant defense mechanism. In Viola cotyledon (Violeta), this protein is Cyclotide vico-A.